The sequence spans 863 residues: FO synthase (863 aa).

Radical SAM core domains follow at residues 91-343 (ITYS…APPN) and 551-792 (VTFV…SHIQ). A cofG-like region spans residues 92–424 (TYSRKVFIPV…PRVRGHVVAL (333 aa)). C105, C109, C112, C565, C569, and C572 together coordinate [4Fe-4S] cluster. The segment at 528 to 861 (DGPALEAVTA…RQRTTTYALR (334 aa)) is cofH-like.

This sequence in the N-terminal section; belongs to the radical SAM superfamily. CofG family. It in the C-terminal section; belongs to the radical SAM superfamily. CofH family. The cofactor is [4Fe-4S] cluster.

The catalysed reaction is 5-amino-6-(D-ribitylamino)uracil + L-tyrosine + S-adenosyl-L-methionine = 5-amino-5-(4-hydroxybenzyl)-6-(D-ribitylimino)-5,6-dihydrouracil + 2-iminoacetate + 5'-deoxyadenosine + L-methionine + H(+). It catalyses the reaction 5-amino-5-(4-hydroxybenzyl)-6-(D-ribitylimino)-5,6-dihydrouracil + S-adenosyl-L-methionine = 7,8-didemethyl-8-hydroxy-5-deazariboflavin + 5'-deoxyadenosine + L-methionine + NH4(+) + H(+). It participates in cofactor biosynthesis; coenzyme F0 biosynthesis. Catalyzes the radical-mediated synthesis of 7,8-didemethyl-8-hydroxy-5-deazariboflavin (FO) from 5-amino-6-(D-ribitylamino)uracil and L-tyrosine. This is FO synthase (fbiC) from Mycobacterium leprae (strain TN).